We begin with the raw amino-acid sequence, 72 residues long: Translation initiation factor IF-1 (72 aa).

Residues 1–72 (MAKEDVIEFS…TKGRITFRYK (72 aa)) form the S1-like domain.

Belongs to the IF-1 family. Component of the 30S ribosomal translation pre-initiation complex which assembles on the 30S ribosome in the order IF-2 and IF-3, IF-1 and N-formylmethionyl-tRNA(fMet); mRNA recruitment can occur at any time during PIC assembly.

The protein localises to the cytoplasm. Functionally, one of the essential components for the initiation of protein synthesis. Stabilizes the binding of IF-2 and IF-3 on the 30S subunit to which N-formylmethionyl-tRNA(fMet) subsequently binds. Helps modulate mRNA selection, yielding the 30S pre-initiation complex (PIC). Upon addition of the 50S ribosomal subunit IF-1, IF-2 and IF-3 are released leaving the mature 70S translation initiation complex. This chain is Translation initiation factor IF-1, found in Paramagnetospirillum magneticum (strain ATCC 700264 / AMB-1) (Magnetospirillum magneticum).